A 148-amino-acid polypeptide reads, in one-letter code: Large ribosomal subunit protein uL15 (148 aa).

A compositionally biased stretch (basic residues) spans 1–30; that stretch reads MPSRLRKTRKLRGHVSHGHGRIGKHRKHPG. A disordered region spans residues 1-39; the sequence is MPSRLRKTRKLRGHVSHGHGRIGKHRKHPGGRGNAGGLH. (3S)-3-hydroxyhistidine is present on His39. N6-acetyllysine occurs at positions 47 and 55. Ser68 is modified (phosphoserine). An N6-acetyllysine modification is found at Lys110.

The protein belongs to the universal ribosomal protein uL15 family. In terms of assembly, component of the large ribosomal subunit. Hydroxylated on His-39 by MINA.

The protein resides in the cytoplasm. Its function is as follows. Component of the large ribosomal subunit. The ribosome is a large ribonucleoprotein complex responsible for the synthesis of proteins in the cell. This is Large ribosomal subunit protein uL15 (RPL27A) from Macaca fascicularis (Crab-eating macaque).